The chain runs to 1050 residues: Mitotic checkpoint serine/threonine-protein kinase BUB1 beta (1050 aa).

The BUB1 N-terminal domain maps to phenylalanine 62–threonine 226. The Nuclear localization signal motif lies at glycine 111–aspartate 118. The tract at residues alanine 152–proline 185 is necessary for interaction with KNL1. Residues arginine 224–serine 232 carry the D-box motif. Residue lysine 250 is modified to N6-acetyllysine; by PCAF. Serine 367 is modified (phosphoserine). A disordered region spans residues threonine 368–lysine 393. Phosphoserine is present on serine 435. Residues isoleucine 456–leucine 480 form a disordered region. A phosphoserine mark is found at serine 543, serine 665, and serine 670. A Phosphoserine; by PLK1 modification is found at serine 676. The residue at position 697 (serine 697) is a Phosphoserine. The Protein kinase domain occupies tyrosine 766–glutamine 1050. Tyrosine 772–leucine 780 contributes to the ATP binding site. A Phosphothreonine; by PLK1 modification is found at threonine 792. Lysine 795 lines the ATP pocket. Aspartate 882 (proton acceptor) is an active-site residue. At threonine 1008 the chain carries Phosphothreonine; by PLK1. Residue threonine 1042 is modified to Phosphothreonine. Phosphoserine is present on serine 1043.

Belongs to the protein kinase superfamily. Ser/Thr protein kinase family. BUB1 subfamily. In terms of assembly, interacts with CENPE. Interacts with PLK1. Part of a complex containing BUB3, CDC20 and BUB1B. Interacts with anaphase-promoting complex/cyclosome (APC/C). Interacts with KNL1. Interacts with KAT2B. Interacts with RIPK3. Interacts with the closed conformation form of MAD2L1. Post-translationally, proteolytically cleaved by caspase-3 in a cell cycle specific manner. The cleavage might be involved in the durability of the cell cycle delay. Caspase-3 cleavage is associated with abrogation of the mitotic checkpoint. The major site of cleavage is at Asp-610. In terms of processing, acetylation at Lys-250 regulates its degradation and timing in anaphase entry. Ubiquitinated. Degraded by the proteasome. Ubiquitinated by UBR5, promoting disassembly of the mitotic checkpoint complex from the APC/C complex. Post-translationally, sumoylated with SUMO2 and SUMO3. The sumoylation mediates the association with CENPE at the kinetochore. In terms of processing, autophosphorylated in vitro. Intramolecular autophosphorylation is stimulated by CENPE. Phosphorylated during mitosis and hyperphosphorylated in mitotically arrested cells. Phosphorylation at Ser-670 and Ser-1043 occurs at kinetochores upon mitotic entry with dephosphorylation at the onset of anaphase. As to expression, highly expressed in thymus followed by spleen. Preferentially expressed in tissues with a high mitotic index.

The protein resides in the cytoplasm. The protein localises to the nucleus. Its subcellular location is the chromosome. It localises to the centromere. It is found in the kinetochore. The protein resides in the cytoskeleton. The protein localises to the microtubule organizing center. Its subcellular location is the centrosome. The catalysed reaction is L-seryl-[protein] + ATP = O-phospho-L-seryl-[protein] + ADP + H(+). It catalyses the reaction L-threonyl-[protein] + ATP = O-phospho-L-threonyl-[protein] + ADP + H(+). Kinase activity stimulated by CENPE. In terms of biological role, essential component of the mitotic checkpoint. Required for normal mitosis progression. The mitotic checkpoint delays anaphase until all chromosomes are properly attached to the mitotic spindle. One of its checkpoint functions is to inhibit the activity of the anaphase-promoting complex/cyclosome (APC/C) by blocking the binding of CDC20 to APC/C, independently of its kinase activity. The other is to monitor kinetochore activities that depend on the kinetochore motor CENPE. Required for kinetochore localization of CENPE. Negatively regulates PLK1 activity in interphase cells and suppresses centrosome amplification. Also implicated in triggering apoptosis in polyploid cells that exit aberrantly from mitotic arrest. May play a role for tumor suppression. This is Mitotic checkpoint serine/threonine-protein kinase BUB1 beta (BUB1B) from Homo sapiens (Human).